Here is a 601-residue protein sequence, read N- to C-terminus: Proline--tRNA ligase (601 aa).

Belongs to the class-II aminoacyl-tRNA synthetase family. ProS type 1 subfamily. Homodimer.

The protein resides in the cytoplasm. It carries out the reaction tRNA(Pro) + L-proline + ATP = L-prolyl-tRNA(Pro) + AMP + diphosphate. Catalyzes the attachment of proline to tRNA(Pro) in a two-step reaction: proline is first activated by ATP to form Pro-AMP and then transferred to the acceptor end of tRNA(Pro). As ProRS can inadvertently accommodate and process non-cognate amino acids such as alanine and cysteine, to avoid such errors it has two additional distinct editing activities against alanine. One activity is designated as 'pretransfer' editing and involves the tRNA(Pro)-independent hydrolysis of activated Ala-AMP. The other activity is designated 'posttransfer' editing and involves deacylation of mischarged Ala-tRNA(Pro). The misacylated Cys-tRNA(Pro) is not edited by ProRS. This is Proline--tRNA ligase from Trichodesmium erythraeum (strain IMS101).